A 252-amino-acid polypeptide reads, in one-letter code: 5-oxoprolinase subunit A (252 aa).

The protein belongs to the LamB/PxpA family. As to quaternary structure, forms a complex composed of PxpA, PxpB and PxpC.

The catalysed reaction is 5-oxo-L-proline + ATP + 2 H2O = L-glutamate + ADP + phosphate + H(+). In terms of biological role, catalyzes the cleavage of 5-oxoproline to form L-glutamate coupled to the hydrolysis of ATP to ADP and inorganic phosphate. The polypeptide is 5-oxoprolinase subunit A (Bacillus cytotoxicus (strain DSM 22905 / CIP 110041 / 391-98 / NVH 391-98)).